We begin with the raw amino-acid sequence, 459 residues long: Methylenetetrahydrofolate--tRNA-(uracil-5-)-methyltransferase TrmFO (459 aa).

An FAD-binding site is contributed by glycine 26–glycine 31.

Belongs to the MnmG family. TrmFO subfamily. It depends on FAD as a cofactor.

Its subcellular location is the cytoplasm. The enzyme catalyses uridine(54) in tRNA + (6R)-5,10-methylene-5,6,7,8-tetrahydrofolate + NADH + H(+) = 5-methyluridine(54) in tRNA + (6S)-5,6,7,8-tetrahydrofolate + NAD(+). It carries out the reaction uridine(54) in tRNA + (6R)-5,10-methylene-5,6,7,8-tetrahydrofolate + NADPH + H(+) = 5-methyluridine(54) in tRNA + (6S)-5,6,7,8-tetrahydrofolate + NADP(+). In terms of biological role, catalyzes the folate-dependent formation of 5-methyl-uridine at position 54 (M-5-U54) in all tRNAs. The sequence is that of Methylenetetrahydrofolate--tRNA-(uracil-5-)-methyltransferase TrmFO from Synechococcus sp. (strain JA-2-3B'a(2-13)) (Cyanobacteria bacterium Yellowstone B-Prime).